The chain runs to 37 residues: uncharacterized protein (37 aa).

Positions 1–23 are cleaved as a signal peptide; the sequence is MLNFSLCLYPVFILNKLVLRTQS.

This sequence belongs to the orthopoxviruses VACWR204.5 protein family.

This is an uncharacterized protein from Vaccinia virus (strain Western Reserve) (VACV).